A 95-amino-acid chain; its full sequence is Class II hydrophobin 3 (95 aa).

An N-terminal signal peptide occupies residues M1–A16. 4 disulfide bridges follow: C28-C77, C38-C68, C39-C51, and C78-C89.

It belongs to the cerato-ulmin hydrophobin family.

The protein localises to the secreted. It is found in the cell wall. Functionally, aerial growth, conidiation, and dispersal of filamentous fungi in the environment rely upon a capability of their secreting small amphipathic proteins called hydrophobins (HPBs) with low sequence identity. Class I can self-assemble into an outermost layer of rodlet bundles on aerial cell surfaces, conferring cellular hydrophobicity that supports fungal growth, development and dispersal; whereas Class II form highly ordered films at water-air interfaces through intermolecular interactions but contribute nothing to the rodlet structure. Hyd3 plays a neglectable role in hyphal growth and asexual development and does not seem involved in cellular hydrophobicity, conidial adhesion, stress tolerance nor insect pathogenicity. This chain is Class II hydrophobin 3, found in Metarhizium robertsii (strain ARSEF 23 / ATCC MYA-3075) (Metarhizium anisopliae (strain ARSEF 23)).